The sequence spans 359 residues: Ribosomal RNA small subunit methyltransferase H (359 aa).

Residues 39 to 41 (AGH), aspartate 58, phenylalanine 87, aspartate 108, and glutamine 115 contribute to the S-adenosyl-L-methionine site. The disordered stretch occupies residues 339-359 (IQGSASPGRAKNTARIRTRRG). Basic residues predominate over residues 350 to 359 (NTARIRTRRG).

Belongs to the methyltransferase superfamily. RsmH family.

The protein localises to the cytoplasm. It carries out the reaction cytidine(1402) in 16S rRNA + S-adenosyl-L-methionine = N(4)-methylcytidine(1402) in 16S rRNA + S-adenosyl-L-homocysteine + H(+). Specifically methylates the N4 position of cytidine in position 1402 (C1402) of 16S rRNA. The sequence is that of Ribosomal RNA small subunit methyltransferase H from Bifidobacterium longum (strain DJO10A).